A 147-amino-acid chain; its full sequence is Lysozyme C-1 (147 aa).

The N-terminal stretch at 1–18 (MKALIILGLLCLSVAVQG) is a signal peptide. The C-type lysozyme domain occupies 19–147 (KVFERCELAR…VSSYVEGCSL (129 aa)). 4 cysteine pairs are disulfide-bonded: Cys24–Cys145, Cys48–Cys133, Cys83–Cys99, and Cys95–Cys113. Catalysis depends on residues Glu53 and Asp71.

The protein belongs to the glycosyl hydrolase 22 family. In terms of assembly, monomer. Expressed in stomach.

Its subcellular location is the secreted. It carries out the reaction Hydrolysis of (1-&gt;4)-beta-linkages between N-acetylmuramic acid and N-acetyl-D-glucosamine residues in a peptidoglycan and between N-acetyl-D-glucosamine residues in chitodextrins.. Its function is as follows. Lysozymes have primarily a bacteriolytic function; those in tissues and body fluids are associated with the monocyte-macrophage system and enhance the activity of immunoagents. This chain is Lysozyme C-1, found in Ovis aries (Sheep).